We begin with the raw amino-acid sequence, 217 residues long: tRNA (guanine-N(7)-)-methyltransferase (217 aa).

S-adenosyl-L-methionine-binding residues include glutamate 43, aspartate 68, asparagine 101, and asparagine 123. Position 127 (lysine 127) interacts with substrate. Positions 129–134 (RHNKRR) are interaction with RNA. Substrate contacts are provided by residues aspartate 159 and 196 to 199 (TEYE).

This sequence belongs to the class I-like SAM-binding methyltransferase superfamily. TrmB family.

It carries out the reaction guanosine(46) in tRNA + S-adenosyl-L-methionine = N(7)-methylguanosine(46) in tRNA + S-adenosyl-L-homocysteine. Its pathway is tRNA modification; N(7)-methylguanine-tRNA biosynthesis. Its function is as follows. Catalyzes the formation of N(7)-methylguanine at position 46 (m7G46) in tRNA. In Clostridium botulinum (strain Loch Maree / Type A3), this protein is tRNA (guanine-N(7)-)-methyltransferase.